The chain runs to 277 residues: Phosphatidylglycerol--prolipoprotein diacylglyceryl transferase (277 aa).

The next 4 membrane-spanning stretches (helical) occupy residues 18 to 38 (ISVK…LLLA), 51 to 71 (IIVD…RIYY), 89 to 109 (IWHG…TAII), and 116 to 136 (ISFW…QAIG). Arginine 137 provides a ligand contact to a 1,2-diacyl-sn-glycero-3-phospho-(1'-sn-glycerol). The next 3 helical transmembrane spans lie at 177–197 (QPTF…LLII), 205–225 (GELF…IEGM), and 235–255 (FRVS…IIIY).

This sequence belongs to the Lgt family.

Its subcellular location is the cell membrane. The enzyme catalyses L-cysteinyl-[prolipoprotein] + a 1,2-diacyl-sn-glycero-3-phospho-(1'-sn-glycerol) = an S-1,2-diacyl-sn-glyceryl-L-cysteinyl-[prolipoprotein] + sn-glycerol 1-phosphate + H(+). It functions in the pathway protein modification; lipoprotein biosynthesis (diacylglyceryl transfer). Its function is as follows. Catalyzes the transfer of the diacylglyceryl group from phosphatidylglycerol to the sulfhydryl group of the N-terminal cysteine of a prolipoprotein, the first step in the formation of mature lipoproteins. The protein is Phosphatidylglycerol--prolipoprotein diacylglyceryl transferase of Listeria monocytogenes serovar 1/2a (strain ATCC BAA-679 / EGD-e).